Consider the following 278-residue polypeptide: Elongation factor Ts (278 aa).

The interval Thr79–Val82 is involved in Mg(2+) ion dislocation from EF-Tu.

The protein belongs to the EF-Ts family.

It is found in the cytoplasm. In terms of biological role, associates with the EF-Tu.GDP complex and induces the exchange of GDP to GTP. It remains bound to the aminoacyl-tRNA.EF-Tu.GTP complex up to the GTP hydrolysis stage on the ribosome. This Borrelia recurrentis (strain A1) protein is Elongation factor Ts.